The chain runs to 201 residues: Small ribosomal subunit protein uS4c (201 aa).

The interval 20 to 43 (GLTSKRPRAGSDLRNQSRSGKRSQ) is disordered. The 61-residue stretch at 89–149 (MRLDNILFRL…DEQKSRALIQ (61 aa)) folds into the S4 RNA-binding domain.

It belongs to the universal ribosomal protein uS4 family. Part of the 30S ribosomal subunit. Contacts protein S5. The interaction surface between S4 and S5 is involved in control of translational fidelity.

It localises to the plastid. It is found in the chloroplast. One of the primary rRNA binding proteins, it binds directly to 16S rRNA where it nucleates assembly of the body of the 30S subunit. In terms of biological role, with S5 and S12 plays an important role in translational accuracy. This Buxus microphylla (Littleleaf boxwood) protein is Small ribosomal subunit protein uS4c (rps4).